Reading from the N-terminus, the 478-residue chain is Aspartyl/glutamyl-tRNA(Asn/Gln) amidotransferase subunit B 2 (478 aa).

This sequence belongs to the GatB/GatE family. GatB subfamily. Heterotrimer of A, B and C subunits.

It carries out the reaction L-glutamyl-tRNA(Gln) + L-glutamine + ATP + H2O = L-glutaminyl-tRNA(Gln) + L-glutamate + ADP + phosphate + H(+). The enzyme catalyses L-aspartyl-tRNA(Asn) + L-glutamine + ATP + H2O = L-asparaginyl-tRNA(Asn) + L-glutamate + ADP + phosphate + 2 H(+). Allows the formation of correctly charged Asn-tRNA(Asn) or Gln-tRNA(Gln) through the transamidation of misacylated Asp-tRNA(Asn) or Glu-tRNA(Gln) in organisms which lack either or both of asparaginyl-tRNA or glutaminyl-tRNA synthetases. The reaction takes place in the presence of glutamine and ATP through an activated phospho-Asp-tRNA(Asn) or phospho-Glu-tRNA(Gln). The polypeptide is Aspartyl/glutamyl-tRNA(Asn/Gln) amidotransferase subunit B 2 (gatB2) (Clostridium acetobutylicum (strain ATCC 824 / DSM 792 / JCM 1419 / IAM 19013 / LMG 5710 / NBRC 13948 / NRRL B-527 / VKM B-1787 / 2291 / W)).